Reading from the N-terminus, the 214-residue chain is Cytochrome b (214 aa).

4 helical membrane-spanning segments follow: residues 31–51 (FGSM…FLAI), 75–96 (WIMQ…YIHI), 111–131 (WLSG…GYVL), and 176–196 (FFAL…LHIL). Heme b-binding residues include His-81 and His-95. Positions 180 and 194 each coordinate heme b. Position 199 (His-199) interacts with a ubiquinone.

Belongs to the cytochrome b family. The cytochrome bc1 complex contains 3 respiratory subunits (MT-CYB, CYC1 and UQCRFS1), 2 core proteins (UQCRC1 and UQCRC2) and probably 6 low-molecular weight proteins. Heme b is required as a cofactor.

It localises to the mitochondrion inner membrane. Component of the ubiquinol-cytochrome c reductase complex (complex III or cytochrome b-c1 complex) that is part of the mitochondrial respiratory chain. The b-c1 complex mediates electron transfer from ubiquinol to cytochrome c. Contributes to the generation of a proton gradient across the mitochondrial membrane that is then used for ATP synthesis. The protein is Cytochrome b (MT-CYB) of Crotalus atrox (Western diamondback rattlesnake).